A 168-amino-acid polypeptide reads, in one-letter code: Protein archease (168 aa).

Ala2 bears the N-acetylalanine mark. Residues Asp39, Asp167, and Ile168 each contribute to the Ca(2+) site.

Belongs to the archease family. In terms of assembly, component of the tRNA-splicing ligase complex.

In terms of biological role, component of the tRNA-splicing ligase complex required to facilitate the enzymatic turnover of catalytic subunit RTCB. Together with DDX1, acts by facilitating the guanylylation of RTCB, a key intermediate step in tRNA ligation. In Mus musculus (Mouse), this protein is Protein archease (Zbtb8os).